Consider the following 500-residue polypeptide: Probable cytosol aminopeptidase (500 aa).

Positions 265 and 270 each coordinate Mn(2+). The active site involves lysine 277. Mn(2+) contacts are provided by aspartate 288, aspartate 347, and glutamate 349. Arginine 351 is a catalytic residue.

It belongs to the peptidase M17 family. It depends on Mn(2+) as a cofactor.

Its subcellular location is the cytoplasm. It carries out the reaction Release of an N-terminal amino acid, Xaa-|-Yaa-, in which Xaa is preferably Leu, but may be other amino acids including Pro although not Arg or Lys, and Yaa may be Pro. Amino acid amides and methyl esters are also readily hydrolyzed, but rates on arylamides are exceedingly low.. It catalyses the reaction Release of an N-terminal amino acid, preferentially leucine, but not glutamic or aspartic acids.. In terms of biological role, presumably involved in the processing and regular turnover of intracellular proteins. Catalyzes the removal of unsubstituted N-terminal amino acids from various peptides. The chain is Probable cytosol aminopeptidase from Rickettsia massiliae (strain Mtu5).